The primary structure comprises 429 residues: UPF0597 protein GSU1527 (429 aa).

It belongs to the UPF0597 family.

This Geobacter sulfurreducens (strain ATCC 51573 / DSM 12127 / PCA) protein is UPF0597 protein GSU1527.